Here is a 420-residue protein sequence, read N- to C-terminus: COP9 signalosome complex subunit 5 (420 aa).

One can recognise an MPN domain in the interval 73–208 (AALSALACMK…IGAFRTMPET (136 aa)). Zn(2+)-binding residues include histidine 154, histidine 156, and aspartate 167. Positions 154–167 (HSHPGYGCWLSGID) match the JAMM motif motif.

The protein belongs to the peptidase M67A family. CSN5 subfamily. As to quaternary structure, component of the COP9 signalosome (CSN) complex.

It is found in the cytoplasm. Its subcellular location is the nucleus. In terms of biological role, catalytic component of the COP9 signalosome (CSN) complex that acts as an regulator of the ubiquitin (Ubl) conjugation pathway by mediating the deneddylation of the cullin subunit of SCF-type E3 ubiquitin-protein ligase complexes. The CSN complex is involved in the regulation of the mating pheromone response. This is COP9 signalosome complex subunit 5 (RRI1) from Eremothecium gossypii (strain ATCC 10895 / CBS 109.51 / FGSC 9923 / NRRL Y-1056) (Yeast).